Consider the following 439-residue polypeptide: Hydroxyornithine transacylase SID3 (439 aa).

Residues 437 to 439 carry the PTS1-type peroxisomal targeting signal motif; it reads SKL.

Belongs to the lysine N-acyltransferase mbtK family.

It localises to the peroxisome. Its pathway is siderophore biosynthesis. Functionally, hydroxyornithine transacylase; part of the gene cluster that mediates the biosynthesis of hydroxamate-containing siderophores that play a critical role in virulence via intracellular iron acquisition during macrophage infection. In Ajellomyces capsulatus (Darling's disease fungus), this protein is Hydroxyornithine transacylase SID3.